A 520-amino-acid polypeptide reads, in one-letter code: tRNA-2-methylthio-N(6)-dimethylallyladenosine synthase (520 aa).

One can recognise an MTTase N-terminal domain in the interval 77-195 (KKFLIRTYGC…LPHLLRDAIF (119 aa)). Residues Cys86, Cys122, Cys156, Cys232, Cys236, and Cys239 each contribute to the [4Fe-4S] cluster site. Positions 218 to 448 (RKNKTQAWVN…ALVNDISNKR (231 aa)) constitute a Radical SAM core domain. The region spanning 450–513 (LDYQDKIVEV…TWSLDGEIVS (64 aa)) is the TRAM domain.

The protein belongs to the methylthiotransferase family. MiaB subfamily. Monomer. The cofactor is [4Fe-4S] cluster.

It is found in the cytoplasm. It catalyses the reaction N(6)-dimethylallyladenosine(37) in tRNA + (sulfur carrier)-SH + AH2 + 2 S-adenosyl-L-methionine = 2-methylsulfanyl-N(6)-dimethylallyladenosine(37) in tRNA + (sulfur carrier)-H + 5'-deoxyadenosine + L-methionine + A + S-adenosyl-L-homocysteine + 2 H(+). Catalyzes the methylthiolation of N6-(dimethylallyl)adenosine (i(6)A), leading to the formation of 2-methylthio-N6-(dimethylallyl)adenosine (ms(2)i(6)A) at position 37 in tRNAs that read codons beginning with uridine. The polypeptide is tRNA-2-methylthio-N(6)-dimethylallyladenosine synthase (Shouchella clausii (strain KSM-K16) (Alkalihalobacillus clausii)).